We begin with the raw amino-acid sequence, 847 residues long: DNA mismatch repair protein MutS (847 aa).

602–609 (GPNMSGKS) contributes to the ATP binding site.

Belongs to the DNA mismatch repair MutS family.

In terms of biological role, this protein is involved in the repair of mismatches in DNA. It is possible that it carries out the mismatch recognition step. This protein has a weak ATPase activity. The sequence is that of DNA mismatch repair protein MutS from Streptococcus uberis (strain ATCC BAA-854 / 0140J).